We begin with the raw amino-acid sequence, 185 residues long: Lysozyme g (185 aa).

Glu73 is a catalytic residue.

It belongs to the glycosyl hydrolase 23 family.

The enzyme catalyses Hydrolysis of (1-&gt;4)-beta-linkages between N-acetylmuramic acid and N-acetyl-D-glucosamine residues in a peptidoglycan and between N-acetyl-D-glucosamine residues in chitodextrins.. The sequence is that of Lysozyme g from Cyprinus carpio (Common carp).